Consider the following 481-residue polypeptide: Proton-coupled amino acid transporter 2 (481 aa).

The Cytoplasmic segment spans residues 1–56 (MSVTKSAGSPQVAATVKLDLVSFPESAKKVQSQDPNPVNGSSSESSEKTKGITGFQ). The interval 26 to 49 (SAKKVQSQDPNPVNGSSSESSEKT) is disordered. A compositionally biased stretch (polar residues) spans 29–40 (KVQSQDPNPVNG). A helical transmembrane segment spans residues 57 to 77 (TLVHLVKGNMGTGILGLPLAV). Residues 78–79 (KN) are Extracellular-facing. Residues 80–100 (AGILMGPLSLLVMGLIACHCM) form a helical membrane-spanning segment. Residues 101–146 (HILVRCAQRFCHRLNKPFMDYGDTVMHGLASSPNTWLQSHAHWGRH) lie on the Cytoplasmic side of the membrane. The helical transmembrane segment at 147–167 (AVSFFLIVTQLGFCCVYIVFL) threads the bilayer. The Extracellular segment spans residues 168 to 195 (ADNLKQVVEAVNSTTISCHKNETVVLTP). A helical membrane pass occupies residues 196 to 216 (TIDSRLYMLAFLPVLGLLVFI). Over 217–220 (RNLR) the chain is Cytoplasmic. Residues 221 to 241 (VLTIFSLLANVSMLVSLVIIG) traverse the membrane as a helical segment. At 242-262 (QYIIQGIPDPSQLPLVASWKT) the chain is on the extracellular side. A helical membrane pass occupies residues 263–283 (YPLFFGTAIFSFESIGVVLPL). The Cytoplasmic portion of the chain corresponds to 284-295 (ENKMKDARRFPT). The chain crosses the membrane as a helical span at residues 296–316 (ILSLGMSIITTLYIAIGALGY). Residues 317 to 343 (LRFGDDIKASITLNLPNCWLYQSVKLL) lie on the Extracellular side of the membrane. The helical transmembrane segment at 344 to 364 (YVVGILCTHALQFYVPAEIII) threads the bilayer. At 365–377 (PLAVSQVSKRWAL) the chain is on the cytoplasmic side. A helical membrane pass occupies residues 378 to 398 (PVDLSIRLALVCVTCMLAILI). Residues 399–402 (PRLD) lie on the Extracellular side of the membrane. A helical transmembrane segment spans residues 403-423 (LVLSLVGSVSSSALALIIPPL). Residues 424-444 (LEVTTYYGEGMSPLTITKDAL) lie on the Cytoplasmic side of the membrane. The helical transmembrane segment at 445-465 (ISILGFMGFVVGTYQALDELI) threads the bilayer. At 466 to 481 (RSGNSLPLSNSTMFIQ) the chain is on the extracellular side.

The protein belongs to the amino acid/polyamine transporter 2 family. Expressed in lung and spleen, and to a lower extent in brain, heart, kidney and skeletal muscle.

The protein localises to the cell membrane. It is found in the endoplasmic reticulum membrane. It localises to the recycling endosome membrane. The enzyme catalyses glycine(in) + H(+)(in) = glycine(out) + H(+)(out). It catalyses the reaction L-alanine(in) + H(+)(in) = L-alanine(out) + H(+)(out). It carries out the reaction D-alanine(in) + H(+)(in) = D-alanine(out) + H(+)(out). The catalysed reaction is L-proline(out) + H(+)(out) = L-proline(in) + H(+)(in). The enzyme catalyses D-proline(out) + H(+)(out) = D-proline(in) + H(+)(in). It catalyses the reaction 4-hydroxy-L-proline(in) + H(+)(in) = 4-hydroxy-L-proline(out) + H(+)(out). It carries out the reaction L-serine(in) + H(+)(in) = L-serine(out) + H(+)(out). The catalysed reaction is D-serine(out) + H(+)(out) = D-serine(in) + H(+)(in). The enzyme catalyses beta-alanine(in) + H(+)(in) = beta-alanine(out) + H(+)(out). It catalyses the reaction 4-aminobutanoate(in) + H(+)(in) = 4-aminobutanoate(out) + H(+)(out). It carries out the reaction sarcosine(in) + H(+)(in) = sarcosine(out) + H(+)(out). The catalysed reaction is N,N-dimethylglycine(in) + H(+)(in) = N,N-dimethylglycine(out) + H(+)(out). With respect to regulation, inhibited by L- and D-pipecolic acid, nipecotic acid, isonipecotic acid, L- and D-cycloserine, and L-2-azetidine-carboxylate. Its function is as follows. Electrogenic proton/amino acid symporter with a high selectivity for the small side chains amino acids glycine, alanine and proline, where both L- and D-enantiomers are transported. Extension of the backbone length, as in beta-alanine and 4-aminobutanoate or methylation of the amino group, as in sarcosine and N,N-dimethylglycine, are also tolerated but decrease transport efficiency. A free carboxyl group is preferred. In Rattus norvegicus (Rat), this protein is Proton-coupled amino acid transporter 2.